A 241-amino-acid chain; its full sequence is Exosome complex component RRP41 homolog (241 aa).

Met-1 bears the N-acetylmethionine mark.

Belongs to the RNase PH family. Component of the RNA exosome complex. Interacts with RPP4.

The protein resides in the cytoplasm. It is found in the nucleus. It localises to the nucleolus. Non-catalytic component of the RNA exosome complex which has 3'-&gt;5' exoribonuclease activity and participates in a multitude of cellular RNA processing, maturation and degradation events. In vitro, is a processive phosphorolytic exonuclease and requires a single-stranded poly(A) tail on the substrate RNA for its activity. Can complement the growth defect of a yeast mutant lacking RRP41 exonuclease. Required for normal development of female gametophytes. This is Exosome complex component RRP41 homolog from Arabidopsis thaliana (Mouse-ear cress).